Reading from the N-terminus, the 128-residue chain is Phosphoribosyl-AMP cyclohydrolase (128 aa).

Residue aspartate 79 participates in Mg(2+) binding. Residue cysteine 80 coordinates Zn(2+). The Mg(2+) site is built by aspartate 81 and aspartate 83. Zn(2+) is bound by residues cysteine 97 and cysteine 104.

It belongs to the PRA-CH family. In terms of assembly, homodimer. Requires Mg(2+) as cofactor. The cofactor is Zn(2+).

It localises to the cytoplasm. It catalyses the reaction 1-(5-phospho-beta-D-ribosyl)-5'-AMP + H2O = 1-(5-phospho-beta-D-ribosyl)-5-[(5-phospho-beta-D-ribosylamino)methylideneamino]imidazole-4-carboxamide. Its pathway is amino-acid biosynthesis; L-histidine biosynthesis; L-histidine from 5-phospho-alpha-D-ribose 1-diphosphate: step 3/9. Catalyzes the hydrolysis of the adenine ring of phosphoribosyl-AMP. In Saccharophagus degradans (strain 2-40 / ATCC 43961 / DSM 17024), this protein is Phosphoribosyl-AMP cyclohydrolase.